The primary structure comprises 218 residues: MRLRNKPWAQKLVAEHPEVILNEPDPDKKINWEERFEDFSKPLAIEIGSGKGQFITTLAKEHPEMNFIGVELQTTAAGMILRTKLEEKIDNLQLMCADAANIAMYLPENSVDIVYLNFSDPWPKTRHEKRRLTYKSFLDKYRQILKPEGHLEFKTDNRGLFEYSLVSLNNYGMKFDYVSLDLHHADDEIFERNVETEYEHKFAAKGNPIYCLHAHFVK.

Glu-46, Glu-71, Asp-98, and Asp-120 together coordinate S-adenosyl-L-methionine. Asp-120 is a catalytic residue. Lys-124 provides a ligand contact to substrate. The tract at residues Arg-126 to Arg-131 is interaction with RNA. Substrate-binding positions include Asp-156 and Thr-196–Glu-199.

Belongs to the class I-like SAM-binding methyltransferase superfamily. TrmB family.

The enzyme catalyses guanosine(46) in tRNA + S-adenosyl-L-methionine = N(7)-methylguanosine(46) in tRNA + S-adenosyl-L-homocysteine. It participates in tRNA modification; N(7)-methylguanine-tRNA biosynthesis. In terms of biological role, catalyzes the formation of N(7)-methylguanine at position 46 (m7G46) in tRNA. The polypeptide is tRNA (guanine-N(7)-)-methyltransferase (Lactobacillus johnsonii (strain CNCM I-12250 / La1 / NCC 533)).